The sequence spans 262 residues: Small ribosomal subunit protein eS1 (262 aa).

A compositionally biased stretch (basic and acidic residues) spans 234 to 251 (DPKEDSGKNVKSLPESKE). The tract at residues 234–262 (DPKEDSGKNVKSLPESKEATNILTAELKH) is disordered.

The protein belongs to the eukaryotic ribosomal protein eS1 family. In terms of assembly, component of the small ribosomal subunit. Mature ribosomes consist of a small (40S) and a large (60S) subunit. The 40S subunit contains about 33 different proteins and 1 molecule of RNA (18S). The 60S subunit contains about 49 different proteins and 3 molecules of RNA (25S, 5.8S and 5S).

It is found in the cytoplasm. The polypeptide is Small ribosomal subunit protein eS1 (Plasmodium yoelii yoelii).